We begin with the raw amino-acid sequence, 432 residues long: Tubulin-specific chaperone cofactor E-like protein (432 aa).

7 LRR repeats span residues 69 to 94, 95 to 117, 118 to 140, 143 to 167, 168 to 191, 193 to 217, and 218 to 242; these read ASHVSEADLGWNQISKWSDIACILKN, LPHLRVLNIGHNPLNPVIDHELP, VSTLHTIILNGTHLPFKTLQSFL, LPKVTELHMSDNQFNDDDDCDEPIS, TTVRTVHLNRCGFLKWSSVMNVVK, FPNVCSVFVCENPLKDVTHCKHFEQ, and LPFWNFLNLAKTSIDSWDSLDQLNR. Positions 254 to 295 are LRRCT; that stretch reads IPLLDALTNEERLHLIIGRLHHLRVLNGSKISSEQREQSERF. The interval 324–415 is ubiquitin-like (UBL); the sequence is VTIDLTPKKE…GDSFLVQEKI (92 aa).

The protein localises to the cytoplasm. Its subcellular location is the cytoskeleton. In terms of biological role, acts as a regulator of tubulin stability. Involved in microtubule-dependent neuronal function. May be involved in tubulin acetylation/deacetylation pathway. This chain is Tubulin-specific chaperone cofactor E-like protein, found in Caenorhabditis elegans.